A 156-amino-acid polypeptide reads, in one-letter code: Type IV major fimbrial protein FimA (156 aa).

The propeptide at 1–7 (MKSLQKG) is leader sequence. Position 8 is an N-methylphenylalanine (phenylalanine 8). Residues 8-28 (FTLIELMIVVAIIGILAAIAI) form a helical membrane-spanning segment. 2 cysteine pairs are disulfide-bonded: cysteine 57–cysteine 67 and cysteine 141–cysteine 154.

It belongs to the N-Me-Phe pilin family. As to quaternary structure, the pili are polar flexible filaments of about 5.4 nanometers diameter and 2.5 micrometers average length; they consist of only a single polypeptide chain arranged in a helical configuration of five subunits per turn in the assembled pilus.

It localises to the fimbrium. The protein resides in the membrane. In terms of biological role, major component of the type IV fimbriae that plays an essential role in twitching motility, natural transformation, and protease secretion. This chain is Type IV major fimbrial protein FimA (fimA), found in Dichelobacter nodosus (Bacteroides nodosus).